A 250-amino-acid chain; its full sequence is Leucyl/phenylalanyl-tRNA--protein transferase (250 aa).

It belongs to the L/F-transferase family.

The protein resides in the cytoplasm. It catalyses the reaction N-terminal L-lysyl-[protein] + L-leucyl-tRNA(Leu) = N-terminal L-leucyl-L-lysyl-[protein] + tRNA(Leu) + H(+). It carries out the reaction N-terminal L-arginyl-[protein] + L-leucyl-tRNA(Leu) = N-terminal L-leucyl-L-arginyl-[protein] + tRNA(Leu) + H(+). The enzyme catalyses L-phenylalanyl-tRNA(Phe) + an N-terminal L-alpha-aminoacyl-[protein] = an N-terminal L-phenylalanyl-L-alpha-aminoacyl-[protein] + tRNA(Phe). In terms of biological role, functions in the N-end rule pathway of protein degradation where it conjugates Leu, Phe and, less efficiently, Met from aminoacyl-tRNAs to the N-termini of proteins containing an N-terminal arginine or lysine. The polypeptide is Leucyl/phenylalanyl-tRNA--protein transferase (Cupriavidus taiwanensis (strain DSM 17343 / BCRC 17206 / CCUG 44338 / CIP 107171 / LMG 19424 / R1) (Ralstonia taiwanensis (strain LMG 19424))).